The following is a 143-amino-acid chain: Flagellar assembly factor FliW (143 aa).

The protein belongs to the FliW family. Interacts with translational regulator CsrA and flagellin(s).

Its subcellular location is the cytoplasm. Its function is as follows. Acts as an anti-CsrA protein, binds CsrA and prevents it from repressing translation of its target genes, one of which is flagellin. Binds to flagellin and participates in the assembly of the flagellum. In Clostridium botulinum (strain ATCC 19397 / Type A), this protein is Flagellar assembly factor FliW.